A 124-amino-acid polypeptide reads, in one-letter code: UPF0231 protein Sbal223_3655 (124 aa).

It belongs to the UPF0231 family.

This Shewanella baltica (strain OS223) protein is UPF0231 protein Sbal223_3655.